A 545-amino-acid chain; its full sequence is Cytochrome P450 monooxygenase 212 (545 aa).

The N-terminal stretch at 1–14 is a signal peptide; sequence MAAYAWLYCALALG. Cys486 contacts heme.

This sequence belongs to the cytochrome P450 family. Requires heme as cofactor.

The protein operates within secondary metabolite biosynthesis. Cytochrome P450 monooxygenase that is able to use anthracene and pyrene as substrates for oxidation. This Postia placenta (strain ATCC 44394 / Madison 698-R) (Brown rot fungus) protein is Cytochrome P450 monooxygenase 212.